The following is a 392-amino-acid chain: HORMA domain-containing protein 1 (392 aa).

Positions 25-227 (HQSLMFVKRL…TPFHTFRLKV (203 aa)) constitute an HORMA domain. The disordered stretch occupies residues 323–359 (SELDVSESKTRSGKIFQSKMVNGNNQQGQTSKENRKR). The segment covering 341–353 (KMVNGNNQQGQTS) has biased composition (polar residues). Phosphoserine is present on Ser375. Residues 381-384 (KKRR) carry the Nuclear localization signal motif.

Interacts with HORMAD2. Interacts with IHO1. Post-translationally, phosphorylated at Ser-375 in a SPO11-dependent manner. As to expression, specifically expressed in meiotic germ cells.

It is found in the nucleus. The protein resides in the chromosome. It localises to the cytoplasm. Its function is as follows. Plays a key role in meiotic progression. Regulates 3 different functions during meiosis: ensures that sufficient numbers of processed DNA double-strand breaks (DSBs) are available for successful homology search by increasing the steady-state numbers of single-stranded DSB ends. Promotes synaptonemal-complex formation independently of its role in homology search. Plays a key role in the male mid-pachytene checkpoint and the female meiotic prophase checkpoint: required for efficient build-up of ATR activity on unsynapsed chromosome regions, a process believed to form the basis of meiotic silencing of unsynapsed chromatin (MSUC) and meiotic prophase quality control in both sexes. This Mus musculus (Mouse) protein is HORMA domain-containing protein 1.